A 304-amino-acid polypeptide reads, in one-letter code: UDP-3-O-acyl-N-acetylglucosamine deacetylase (304 aa).

The Zn(2+) site is built by H78, H235, and D239. Catalysis depends on H262, which acts as the Proton donor.

This sequence belongs to the LpxC family. Zn(2+) is required as a cofactor.

It catalyses the reaction a UDP-3-O-[(3R)-3-hydroxyacyl]-N-acetyl-alpha-D-glucosamine + H2O = a UDP-3-O-[(3R)-3-hydroxyacyl]-alpha-D-glucosamine + acetate. It functions in the pathway glycolipid biosynthesis; lipid IV(A) biosynthesis; lipid IV(A) from (3R)-3-hydroxytetradecanoyl-[acyl-carrier-protein] and UDP-N-acetyl-alpha-D-glucosamine: step 2/6. Catalyzes the hydrolysis of UDP-3-O-myristoyl-N-acetylglucosamine to form UDP-3-O-myristoylglucosamine and acetate, the committed step in lipid A biosynthesis. This chain is UDP-3-O-acyl-N-acetylglucosamine deacetylase, found in Anaeromyxobacter sp. (strain Fw109-5).